A 103-amino-acid chain; its full sequence is Large ribosomal subunit protein bL21 (103 aa).

It belongs to the bacterial ribosomal protein bL21 family. As to quaternary structure, part of the 50S ribosomal subunit. Contacts protein L20.

This protein binds to 23S rRNA in the presence of protein L20. The protein is Large ribosomal subunit protein bL21 of Mycobacterium tuberculosis (strain ATCC 25618 / H37Rv).